The following is a 268-amino-acid chain: Gene 65 protein (268 aa).

The polypeptide is Gene 65 protein (65) (Mycobacterium (Mycobacteriophage L5)).